The primary structure comprises 952 residues: G patch domain-containing protein 1 homolog (952 aa).

Disordered stretches follow at residues 104-127 (QGIR…QRRR), 165-233 (GWKP…DDYE), 320-345 (DKKP…EDNS), 370-432 (RSRF…KDHS), 660-711 (PEKV…RNKP), and 822-952 (VAPE…KSKH). Positions 107-123 (RTRDEFANEDEQKQRSD) are enriched in basic and acidic residues. Residues 153-199 (RDKVAVRILKSMGWKPGQGVGPRQTRKEKRQATARNSKEQYLMEHYG) enclose the G-patch domain. The span at 214 to 233 (DSNNEDEDDEDITFAPDDYE) shows a compositional bias: acidic residues. Residues 323–333 (PKQKKQQHVQQ) are compositionally biased toward basic residues. Basic and acidic residues-rich tracts occupy residues 375 to 402 (PMDK…DLNP), 414 to 432 (QEEK…KDHS), and 679 to 691 (IQDK…EPSK). The span at 886 to 896 (ASSSNESSSSD) shows a compositional bias: low complexity. Basic residues-rich tracts occupy residues 906-934 (KLSK…KKSK) and 941-952 (HKAKKKKKKSKH).

Belongs to the GPATCH1 family.

In Drosophila melanogaster (Fruit fly), this protein is G patch domain-containing protein 1 homolog.